Here is a 451-residue protein sequence, read N- to C-terminus: Jacalin-related lectin 35 (451 aa).

Ala-2 bears the N-acetylalanine mark. Jacalin-type lectin domains follow at residues 2 to 143 (AKKL…YIIP), 156 to 297 (LTKL…YIIP), and 306 to 448 (SNTI…NVAP).

Belongs to the jacalin lectin family. As to quaternary structure, component of the PYK10 complex, at least composed of PYK10/BGLU23, BGLU21, BGLU22, JAL22, JAL23, PBP1/JAL30, PBP2/JAL31, JAL32, JAL33, JAL34, JAL35, GLL22 and GLL23.

The protein is Jacalin-related lectin 35 (JAL35) of Arabidopsis thaliana (Mouse-ear cress).